We begin with the raw amino-acid sequence, 795 residues long: Histidine biosynthesis trifunctional protein (795 aa).

The interval 1–225 (MLPVVPVFNA…VVRQGGSGSF (225 aa)) is phosphoribosyl-AMP cyclohydrolase. Positions 226-308 (CHLETESCFG…FYFAMARLVA (83 aa)) are phosphoribosyl-ATP pyrophosphohydrolase. A histidinol dehydrogenase region spans residues 309 to 795 (NGVSLEDVER…KLGLLPSGFE (487 aa)). The Zn(2+) site is built by Q614 and H617. Active-site residues include E683 and H684. The Zn(2+) site is built by D717 and H776.

In the C-terminal section; belongs to the histidinol dehydrogenase family. It depends on Zn(2+) as a cofactor.

It carries out the reaction 1-(5-phospho-beta-D-ribosyl)-5'-AMP + H2O = 1-(5-phospho-beta-D-ribosyl)-5-[(5-phospho-beta-D-ribosylamino)methylideneamino]imidazole-4-carboxamide. It catalyses the reaction 1-(5-phospho-beta-D-ribosyl)-ATP + H2O = 1-(5-phospho-beta-D-ribosyl)-5'-AMP + diphosphate + H(+). The enzyme catalyses L-histidinol + 2 NAD(+) + H2O = L-histidine + 2 NADH + 3 H(+). It functions in the pathway amino-acid biosynthesis; L-histidine biosynthesis; L-histidine from 5-phospho-alpha-D-ribose 1-diphosphate: step 2/9. The protein operates within amino-acid biosynthesis; L-histidine biosynthesis; L-histidine from 5-phospho-alpha-D-ribose 1-diphosphate: step 3/9. Its pathway is amino-acid biosynthesis; L-histidine biosynthesis; L-histidine from 5-phospho-alpha-D-ribose 1-diphosphate: step 9/9. The polypeptide is Histidine biosynthesis trifunctional protein (HIS4) (Kluyveromyces lactis (strain ATCC 8585 / CBS 2359 / DSM 70799 / NBRC 1267 / NRRL Y-1140 / WM37) (Yeast)).